Here is a 353-residue protein sequence, read N- to C-terminus: Photosystem II protein D1 (353 aa).

Threonine 2 carries the N-acetylthreonine modification. Threonine 2 is modified (phosphothreonine). 3 consecutive transmembrane segments (helical) span residues 29–46 (YIGW…TATS), 118–133 (HFLL…EWEL), and 142–156 (WIAV…AATA). Histidine 118 provides a ligand contact to chlorophyll a. Position 126 (tyrosine 126) interacts with pheophytin a. Residues aspartate 170 and glutamate 189 each contribute to the [CaMn4O5] cluster site. Residues 197-218 (FHMLGVAGVFGGSLFSAMHGSL) form a helical membrane-spanning segment. Histidine 198 is a binding site for chlorophyll a. Residues histidine 215 and 264–265 (SF) contribute to the a quinone site. A Fe cation-binding site is contributed by histidine 215. Fe cation is bound at residue histidine 272. Residues 274–288 (FLAAWPVAGIWFTAL) traverse the membrane as a helical segment. Residues histidine 332, glutamate 333, aspartate 342, and alanine 344 each coordinate [CaMn4O5] cluster. The propeptide occupies 345–353 (AVESISIGG).

Belongs to the reaction center PufL/M/PsbA/D family. PSII is composed of 1 copy each of membrane proteins PsbA, PsbB, PsbC, PsbD, PsbE, PsbF, PsbH, PsbI, PsbJ, PsbK, PsbL, PsbM, PsbT, PsbX, PsbY, PsbZ, Psb30/Ycf12, at least 3 peripheral proteins of the oxygen-evolving complex and a large number of cofactors. It forms dimeric complexes. It depends on The D1/D2 heterodimer binds P680, chlorophylls that are the primary electron donor of PSII, and subsequent electron acceptors. It shares a non-heme iron and each subunit binds pheophytin, quinone, additional chlorophylls, carotenoids and lipids. D1 provides most of the ligands for the Mn4-Ca-O5 cluster of the oxygen-evolving complex (OEC). There is also a Cl(-1) ion associated with D1 and D2, which is required for oxygen evolution. The PSII complex binds additional chlorophylls, carotenoids and specific lipids. as a cofactor. Post-translationally, tyr-161 forms a radical intermediate that is referred to as redox-active TyrZ, YZ or Y-Z. In terms of processing, C-terminally processed by CTPA; processing is essential to allow assembly of the oxygen-evolving complex and thus photosynthetic growth.

The protein resides in the plastid. It localises to the chloroplast thylakoid membrane. It carries out the reaction 2 a plastoquinone + 4 hnu + 2 H2O = 2 a plastoquinol + O2. Its function is as follows. Photosystem II (PSII) is a light-driven water:plastoquinone oxidoreductase that uses light energy to abstract electrons from H(2)O, generating O(2) and a proton gradient subsequently used for ATP formation. It consists of a core antenna complex that captures photons, and an electron transfer chain that converts photonic excitation into a charge separation. The D1/D2 (PsbA/PsbD) reaction center heterodimer binds P680, the primary electron donor of PSII as well as several subsequent electron acceptors. This Pinus contorta (Shore pine) protein is Photosystem II protein D1.